Here is a 350-residue protein sequence, read N- to C-terminus: LysM domain-containing GPI-anchored protein 2 (350 aa).

The first 23 residues, 1 to 23 (METSCFTLLGLLVSLSFFLTLSA), serve as a signal peptide directing secretion. Asn-30, Asn-48, Asn-76, and Asn-99 each carry an N-linked (GlcNAc...) asparagine glycan. 4 disulfides stabilise this stretch: Cys-31/Cys-97, Cys-38/Cys-161, Cys-95/Cys-159, and Cys-97/Cys-161. LysM domains follow at residues 108 to 155 (IEYT…KFWI) and 172 to 216 (YAHV…PLDV). Chitin-binding positions include 114–120 (KDDILSF) and 142–149 (PDPNKIEI). Residues Asn-193, Asn-238, Asn-258, Asn-289, and Asn-305 are each glycosylated (N-linked (GlcNAc...) asparagine). Intrachain disulfides connect Cys-221-Cys-253 and Cys-248-Cys-277. Asp-318 carries the GPI-anchor amidated aspartate lipid modification. Residues 319 to 350 (SAGPDNYASTLSSSFNFVIVLIQCALLCLCLL) constitute a propeptide, removed in mature form.

In terms of assembly, forms homooligomers. Interacts with CERK1. Binds to chitin oligosaccharide elicitor.

The protein localises to the cell membrane. Functionally, chitin elicitor-binding protein involved in the perception of chitin oligosaccharide elicitor. This chain is LysM domain-containing GPI-anchored protein 2 (LYM2), found in Arabidopsis thaliana (Mouse-ear cress).